The sequence spans 189 residues: MTDKTEKVAVDPETVFKRPRECDSPSYQKRQRMALLARKQGAGDSLIAGSAMSKEKKLMTGHAIPPSQLDSQIDDFTGFSKDRMMQKPGSNAPVGGNVTSSFSGDDLECRETASSPKSQREINADIKRKLVKELRCVGQKYEKIFEMLEGVQGPTAVRKRFFESIIKEAARCMRRDFVKHLKKKLKRMI.

Residues 81 to 119 (KDRMMQKPGSNAPVGGNVTSSFSGDDLECRETASSPKSQ) are disordered.

This sequence belongs to the CT45 family. Testis specific. Expressed in cancer cell lines.

Its subcellular location is the nucleus. The polypeptide is Cancer/testis antigen family 45 member A3 (Homo sapiens (Human)).